A 1141-amino-acid polypeptide reads, in one-letter code: IgM protease (1141 aa).

The signal sequence occupies residues methionine 1–alanine 32. Cysteine 195 acts as the Nucleophile in catalysis. 4 disordered regions span residues proline 518–leucine 544, glutamate 725–threonine 749, leucine 781–glutamate 805, and glutamate 839–serine 860. The segment covering serine 526–leucine 544 has biased composition (polar residues). 2 stretches are compositionally biased toward low complexity: residues glutamate 738 to threonine 749 and glutamate 795 to glutamate 805. Residues isoleucine 1119 to leucine 1136 form a helical membrane-spanning segment.

It belongs to the peptidase C66 family.

It is found in the cell membrane. It localises to the secreted. Its activity is regulated as follows. IgM cleavage is inhibited by iodoacetamide but not by AEBSF, bestatin, E-64, Z-LVG-CHN(2), or EDTA. In terms of biological role, catalyzes the specific cleavage of porcine IgM bound to the bacterial surface. Can degrade only IgM but neither IgG nor IgA, and is host specific, as it exclusively cleaves porcine IgM but not IgM from six other species, including human, mouse and a closely related member of the Suidae family. Promotes survival in porcine blood. Is thus involved in a so-far-unknown mechanism of host-pathogen interaction at an early stage of the host immune response. The sequence is that of IgM protease (ide) from Streptococcus suis (strain P1/7).